Consider the following 430-residue polypeptide: Asparagine--tRNA ligase (430 aa).

Belongs to the class-II aminoacyl-tRNA synthetase family. In terms of assembly, homodimer.

It is found in the cytoplasm. It catalyses the reaction tRNA(Asn) + L-asparagine + ATP = L-asparaginyl-tRNA(Asn) + AMP + diphosphate + H(+). This Pelotomaculum thermopropionicum (strain DSM 13744 / JCM 10971 / SI) protein is Asparagine--tRNA ligase.